A 365-amino-acid polypeptide reads, in one-letter code: 3-isopropylmalate dehydrogenase (365 aa).

Residues R96, R106, R134, and D224 each coordinate substrate. 3 residues coordinate Mg(2+): D224, D248, and D252. Position 288–300 (G288–N300) interacts with NAD(+).

This sequence belongs to the isocitrate and isopropylmalate dehydrogenases family. LeuB type 1 subfamily. In terms of assembly, homodimer. Mg(2+) is required as a cofactor. Mn(2+) serves as cofactor.

The protein localises to the cytoplasm. It catalyses the reaction (2R,3S)-3-isopropylmalate + NAD(+) = 4-methyl-2-oxopentanoate + CO2 + NADH. It participates in amino-acid biosynthesis; L-leucine biosynthesis; L-leucine from 3-methyl-2-oxobutanoate: step 3/4. Catalyzes the oxidation of 3-carboxy-2-hydroxy-4-methylpentanoate (3-isopropylmalate) to 3-carboxy-4-methyl-2-oxopentanoate. The product decarboxylates to 4-methyl-2 oxopentanoate. The polypeptide is 3-isopropylmalate dehydrogenase (Dehalococcoides mccartyi (strain CBDB1)).